The primary structure comprises 224 residues: UPF0758 protein Nmul_A2138 (224 aa).

The MPN domain maps to 102 to 224 (AMDSPGPVRA…TLSFAEQGLI (123 aa)). 3 residues coordinate Zn(2+): histidine 173, histidine 175, and aspartate 186. The JAMM motif signature appears at 173–186 (HNHPSGAAEPSHAD).

Belongs to the UPF0758 family.

This chain is UPF0758 protein Nmul_A2138, found in Nitrosospira multiformis (strain ATCC 25196 / NCIMB 11849 / C 71).